Here is a 287-residue protein sequence, read N- to C-terminus: Inorganic pyrophosphatase (287 aa).

Residue Arg79 coordinates diphosphate. Asp116, Asp121, and Asp153 together coordinate Mg(2+). The span at 244–258 (NSTLGNSDSVDSSKL) shows a compositional bias: polar residues. The interval 244–269 (NSTLGNSDSVDSSKLASIPRGENLPP) is disordered.

This sequence belongs to the PPase family. It depends on Mg(2+) as a cofactor.

It localises to the cytoplasm. It catalyses the reaction diphosphate + H2O = 2 phosphate + H(+). Its function is as follows. Involved in osmoadaptation. This Emericella nidulans (strain FGSC A4 / ATCC 38163 / CBS 112.46 / NRRL 194 / M139) (Aspergillus nidulans) protein is Inorganic pyrophosphatase (ipp1).